The following is a 245-amino-acid chain: tRNA1(Val) (adenine(37)-N6)-methyltransferase (245 aa).

The protein belongs to the methyltransferase superfamily. tRNA (adenine-N(6)-)-methyltransferase family.

It is found in the cytoplasm. The catalysed reaction is adenosine(37) in tRNA1(Val) + S-adenosyl-L-methionine = N(6)-methyladenosine(37) in tRNA1(Val) + S-adenosyl-L-homocysteine + H(+). Specifically methylates the adenine in position 37 of tRNA(1)(Val) (anticodon cmo5UAC). This is tRNA1(Val) (adenine(37)-N6)-methyltransferase from Escherichia coli O157:H7 (strain EC4115 / EHEC).